Here is a 305-residue protein sequence, read N- to C-terminus: Peroxisome assembly protein 26 (305 aa).

The segment at 1–25 (MKSDCSTSAAPFRGLGGPLRSSEPV) is disordered. At 1 to 246 (MKSDCSTSAA…RQLWDSAVSH (246 aa)) the chain is on the cytoplasmic side. A helical; Signal-anchor for type II membrane protein transmembrane segment spans residues 247–267 (FFSLPFKKSLLAALILCLLVV). Residues 268–305 (RFDPASPSSLPSLYKLAQLFRWIRKAASSRLYQLRIRD) lie on the Peroxisomal matrix side of the membrane.

The protein belongs to the peroxin-26 family. Interacts (via its cytoplasmic domain) with PEX6; interaction is direct and is ATP-dependent. Interacts with PEX1; interaction is indirect and is mediated via interaction with PEX6.

It is found in the peroxisome membrane. Peroxisomal docking factor that anchors PEX1 and PEX6 to peroxisome membranes. PEX26 is therefore required for the formation of the PEX1-PEX6 AAA ATPase complex, a complex that mediates the extraction of the PEX5 receptor from peroxisomal membrane. This is Peroxisome assembly protein 26 (PEX26) from Macaca fascicularis (Crab-eating macaque).